A 1129-amino-acid chain; its full sequence is PAN2-PAN3 deadenylation complex catalytic subunit PAN2 (1129 aa).

5 WD repeats span residues 20–60 (PPAV…YTSY), 104–146 (PDFK…DTLP), 148–183 (DAQY…VIKV), 186–226 (GHTG…FSLK), and 280–319 (LYDS…HFPE). Residues 320–457 (YSNPTEFADH…DLHLDDVTRK (138 aa)) are linker. The tract at residues 396–427 (RTKRRNQIEVTRQTDRSSDSLTPPKFLSEKSR) is disordered. The region spanning 458-830 (DVPAMYGNVE…LPSVLTFQTK (373 aa)) is the USP domain. One can recognise an Exonuclease domain in the interval 880–1052 (VAIDAEFIRL…IEDATTALKL (173 aa)). Positions 883, 885, 992, and 1045 each coordinate a divalent metal cation. Positions 1083-1129 (APGSGNRNSMPAGMTATGAGRDTPEPMTTPKKGGAFGGVGFRSPMRR) are disordered.

The protein belongs to the peptidase C19 family. PAN2 subfamily. Forms a heterotrimer with an asymmetric homodimer of the regulatory subunit PAN3 to form the poly(A)-nuclease (PAN) deadenylation complex. It depends on a divalent metal cation as a cofactor.

It is found in the cytoplasm. The enzyme catalyses Exonucleolytic cleavage of poly(A) to 5'-AMP.. Its activity is regulated as follows. Positively regulated by the regulatory subunit PAN3. Catalytic subunit of the poly(A)-nuclease (PAN) deadenylation complex, one of two cytoplasmic mRNA deadenylases involved in mRNA turnover. PAN specifically shortens poly(A) tails of RNA and the activity is stimulated by poly(A)-binding protein PAB1. PAN deadenylation is followed by rapid degradation of the shortened mRNA tails by the CCR4-NOT complex. Deadenylated mRNAs are then degraded by two alternative mechanisms, namely exosome-mediated 3'-5' exonucleolytic degradation, or deadenylation-dependent mRNA decaping and subsequent 5'-3' exonucleolytic degradation by XRN1. May also be involved in post-transcriptional maturation of mRNA poly(A) tails. This Phaeosphaeria nodorum (strain SN15 / ATCC MYA-4574 / FGSC 10173) (Glume blotch fungus) protein is PAN2-PAN3 deadenylation complex catalytic subunit PAN2.